The chain runs to 424 residues: 5-methylthioadenosine/S-adenosylhomocysteine deaminase (424 aa).

Zn(2+) is bound by residues histidine 60 and histidine 62. Positions 89 and 181 each coordinate substrate. Histidine 208 is a Zn(2+) binding site. The substrate site is built by glutamate 211 and aspartate 296. Aspartate 296 contributes to the Zn(2+) binding site.

Belongs to the metallo-dependent hydrolases superfamily. MTA/SAH deaminase family. The cofactor is Zn(2+).

It carries out the reaction S-adenosyl-L-homocysteine + H2O + H(+) = S-inosyl-L-homocysteine + NH4(+). The enzyme catalyses S-methyl-5'-thioadenosine + H2O + H(+) = S-methyl-5'-thioinosine + NH4(+). Functionally, catalyzes the deamination of 5-methylthioadenosine and S-adenosyl-L-homocysteine into 5-methylthioinosine and S-inosyl-L-homocysteine, respectively. Is also able to deaminate adenosine. The protein is 5-methylthioadenosine/S-adenosylhomocysteine deaminase of Thermococcus sibiricus (strain DSM 12597 / MM 739).